The sequence spans 334 residues: tRNA N6-adenosine threonylcarbamoyltransferase (334 aa).

H110 and H114 together coordinate Fe cation. Substrate is bound by residues 133-137 (IVSGG), D166, G179, D183, and N275. Residue D303 participates in Fe cation binding.

It belongs to the KAE1 / TsaD family. Fe(2+) is required as a cofactor.

The protein resides in the cytoplasm. It catalyses the reaction L-threonylcarbamoyladenylate + adenosine(37) in tRNA = N(6)-L-threonylcarbamoyladenosine(37) in tRNA + AMP + H(+). Required for the formation of a threonylcarbamoyl group on adenosine at position 37 (t(6)A37) in tRNAs that read codons beginning with adenine. Is involved in the transfer of the threonylcarbamoyl moiety of threonylcarbamoyl-AMP (TC-AMP) to the N6 group of A37, together with TsaE and TsaB. TsaD likely plays a direct catalytic role in this reaction. The chain is tRNA N6-adenosine threonylcarbamoyltransferase from Salinibacter ruber (strain DSM 13855 / M31).